The sequence spans 383 residues: Prokineticin receptor 2 (383 aa).

The Extracellular portion of the chain corresponds to 1 to 54 (MGDQNGNTSFAPDLNPPQDHVSLLPLNYSYGDYDIPLDDDEDVTKTQTFFAAKI). 2 N-linked (GlcNAc...) asparagine glycosylation sites follow: N7 and N27. A helical transmembrane segment spans residues 55 to 75 (VIGVALAGIMLVCGVGNFVFI). Residues 76 to 89 (AALARYKKLRNLTN) lie on the Cytoplasmic side of the membrane. A helical membrane pass occupies residues 90–110 (LLIANLAISDFLVAIVCCPFE). Over 111–136 (MDYYVVRQLSWEHGHVLCASVNYLRT) the chain is Extracellular. Cysteines 128 and 207 form a disulfide. Residues 137 to 157 (VSLYVSTNALLAIAIDRYLAI) form a helical membrane-spanning segment. Residues 158–170 (VHPLKRMNYQTAS) are Cytoplasmic-facing. A helical transmembrane segment spans residues 171 to 191 (FLIALVWMVSILIAIPSAYFT). The Extracellular portion of the chain corresponds to 192-222 (TETILVIVKNQEKLFCGQIWPVDQQLYYKSY). Residues 223-243 (FLFVFGLEFVGPVVTMTLCYA) form a helical membrane-spanning segment. At 244-272 (RISQELWFKAVPGFQTEQIRKRLRCRRKT) the chain is on the cytoplasmic side. A helical transmembrane segment spans residues 273–293 (VLLLMGILTAYVLCWAPFYGF). At 294-312 (TIVRDFFPTLVVKEKHYLT) the chain is on the extracellular side. A helical membrane pass occupies residues 313–333 (AFYVVECIAMSNSMINTICFV). The Cytoplasmic portion of the chain corresponds to 334–383 (TVKNNTMKYFKKMLLLHWRPSHYGSKSSADLDLKTSGVPATEEVDCIRLK).

The protein belongs to the G-protein coupled receptor 1 family. As to quaternary structure, homodimer. Abundantly expressed in the CNS and reproductive organs with the highest levels in the cerebrum, cerebellum, testis and ovary.

Its subcellular location is the cell membrane. In terms of biological role, receptor for prokineticin 2. Exclusively coupled to the G(q) subclass of heteromeric G proteins. Activation leads to mobilization of calcium, stimulation of phosphoinositide turnover and activation of p44/p42 mitogen-activated protein kinase. In Rattus norvegicus (Rat), this protein is Prokineticin receptor 2 (Prokr2).